A 387-amino-acid chain; its full sequence is Polyadenylate-binding protein RBP45A (387 aa).

RRM domains follow at residues 60–140 (KSLW…WAQA), 154–233 (HTIF…PAAN), and 260–332 (TTIF…WGRS). Polar residues predominate over residues 329–342 (WGRSPNKQSDQAQW). The interval 329–387 (WGRSPNKQSDQAQWNGGGYYGYPPQPQGGYGYAAQPPTQDPNAYYGGYTGYGNYQQQRQ) is disordered.

It belongs to the polyadenylate-binding RBP45 family. As to quaternary structure, interacts with the poly(A) tail of mRNA in nucleus. In terms of tissue distribution, mostly expressed in seedlings, and, to a lower extent, in leaves, stems, and flowers. Present in immature anther tissues (tapetum cells) and mature pollen grains.

The protein resides in the nucleus. Functionally, heterogeneous nuclear ribonucleoprotein (hnRNP)-protein binding the poly(A) tail of mRNA and probably involved in some steps of pre-mRNA maturation. This is Polyadenylate-binding protein RBP45A (RBP45A) from Arabidopsis thaliana (Mouse-ear cress).